The sequence spans 270 residues: Monofunctional glycosyltransferase (270 aa).

Residues Met1–Gln35 are disordered. Polar residues predominate over residues Asn11 to His24. Residues Leu47 to Leu67 traverse the membrane as a helical segment.

The protein belongs to the glycosyltransferase 51 family.

The protein resides in the cell membrane. It carries out the reaction [GlcNAc-(1-&gt;4)-Mur2Ac(oyl-L-Ala-gamma-D-Glu-L-Lys-D-Ala-D-Ala)](n)-di-trans,octa-cis-undecaprenyl diphosphate + beta-D-GlcNAc-(1-&gt;4)-Mur2Ac(oyl-L-Ala-gamma-D-Glu-L-Lys-D-Ala-D-Ala)-di-trans,octa-cis-undecaprenyl diphosphate = [GlcNAc-(1-&gt;4)-Mur2Ac(oyl-L-Ala-gamma-D-Glu-L-Lys-D-Ala-D-Ala)](n+1)-di-trans,octa-cis-undecaprenyl diphosphate + di-trans,octa-cis-undecaprenyl diphosphate + H(+). Its pathway is cell wall biogenesis; peptidoglycan biosynthesis. Functionally, peptidoglycan polymerase that catalyzes glycan chain elongation using lipid-linked disaccharide-pentapeptide as the substrate. In Staphylococcus saprophyticus subsp. saprophyticus (strain ATCC 15305 / DSM 20229 / NCIMB 8711 / NCTC 7292 / S-41), this protein is Monofunctional glycosyltransferase.